The primary structure comprises 488 residues: R3H and coiled-coil domain-containing protein 1 (488 aa).

The R3H domain maps to 16–81 (NDFVHRVQEE…KRRTVICHLD (66 aa)). Disordered stretches follow at residues 87 to 180 (SDGP…GDAE) and 195 to 322 (KSPD…DADH). Over residues 114-125 (GAAAGPRGAPAG) the composition is skewed to low complexity. Residue serine 232 is modified to Phosphoserine. Residues 244–321 (SHGMRSLVDQ…EEDEDEADAD (78 aa)) adopt a coiled-coil conformation. The segment covering 252-265 (DQEEEEIEGEEEEK) has biased composition (acidic residues). Composition is skewed to basic and acidic residues over residues 266–280 (VDEKEEDTGKQKERV) and 287–301 (TDAQEGKVDSEGERM). Residues 302-319 (DEGEDKVDAEEEDEDEAD) are compositionally biased toward acidic residues.

The chain is R3H and coiled-coil domain-containing protein 1 from Mus musculus (Mouse).